A 245-amino-acid chain; its full sequence is Orotidine 5'-phosphate decarboxylase (245 aa).

Substrate contacts are provided by residues Asp22, Lys44, 71–80, Thr131, Arg192, Gln201, Gly221, and Arg222; that span reads DLKFHDIPNT. Catalysis depends on Lys73, which acts as the Proton donor.

The protein belongs to the OMP decarboxylase family. Type 1 subfamily. Homodimer.

It carries out the reaction orotidine 5'-phosphate + H(+) = UMP + CO2. Its pathway is pyrimidine metabolism; UMP biosynthesis via de novo pathway; UMP from orotate: step 2/2. In terms of biological role, catalyzes the decarboxylation of orotidine 5'-monophosphate (OMP) to uridine 5'-monophosphate (UMP). This Escherichia coli O45:K1 (strain S88 / ExPEC) protein is Orotidine 5'-phosphate decarboxylase.